The following is a 416-amino-acid chain: Adenylosuccinate synthetase (416 aa).

Residues 12 to 18 (GDEGKGK) and 40 to 42 (GHT) contribute to the GTP site. Catalysis depends on aspartate 13, which acts as the Proton acceptor. Mg(2+)-binding residues include aspartate 13 and glycine 40. IMP contacts are provided by residues 13 to 16 (DEGK), 38 to 41 (NAGH), threonine 125, arginine 139, glutamine 219, threonine 234, and arginine 298. Histidine 41 serves as the catalytic Proton donor. 294–300 (TVTGRKR) is a substrate binding site. Residues arginine 300, 326-328 (KLD), and 404-406 (STS) contribute to the GTP site.

Belongs to the adenylosuccinate synthetase family. In terms of assembly, homodimer. Mg(2+) serves as cofactor.

The protein localises to the cytoplasm. The enzyme catalyses IMP + L-aspartate + GTP = N(6)-(1,2-dicarboxyethyl)-AMP + GDP + phosphate + 2 H(+). It participates in purine metabolism; AMP biosynthesis via de novo pathway; AMP from IMP: step 1/2. In terms of biological role, plays an important role in the de novo pathway of purine nucleotide biosynthesis. Catalyzes the first committed step in the biosynthesis of AMP from IMP. This Aliarcobacter butzleri (strain RM4018) (Arcobacter butzleri) protein is Adenylosuccinate synthetase.